The primary structure comprises 183 residues: dCTP deaminase (183 aa).

DCTP-binding positions include 106–111 (KSTYAR), 130–132 (TLE), glutamine 151, tyrosine 165, and glutamine 175. Catalysis depends on glutamate 132, which acts as the Proton donor/acceptor.

It belongs to the dCTP deaminase family. As to quaternary structure, homotrimer.

The enzyme catalyses dCTP + H2O + H(+) = dUTP + NH4(+). The protein operates within pyrimidine metabolism; dUMP biosynthesis; dUMP from dCTP (dUTP route): step 1/2. Its function is as follows. Catalyzes the deamination of dCTP to dUTP. This chain is dCTP deaminase, found in Acidobacterium capsulatum (strain ATCC 51196 / DSM 11244 / BCRC 80197 / JCM 7670 / NBRC 15755 / NCIMB 13165 / 161).